The chain runs to 175 residues: Shikimate kinase (175 aa).

Position 10–15 (10–15 (GAGKTT)) interacts with ATP. Residue Thr14 participates in Mg(2+) binding. Positions 32, 56, and 78 each coordinate substrate. Arg116 is an ATP binding site. Arg135 contributes to the substrate binding site.

It belongs to the shikimate kinase family. As to quaternary structure, monomer. It depends on Mg(2+) as a cofactor.

It is found in the cytoplasm. It catalyses the reaction shikimate + ATP = 3-phosphoshikimate + ADP + H(+). The protein operates within metabolic intermediate biosynthesis; chorismate biosynthesis; chorismate from D-erythrose 4-phosphate and phosphoenolpyruvate: step 5/7. Its function is as follows. Catalyzes the specific phosphorylation of the 3-hydroxyl group of shikimic acid using ATP as a cosubstrate. The protein is Shikimate kinase of Aromatoleum aromaticum (strain DSM 19018 / LMG 30748 / EbN1) (Azoarcus sp. (strain EbN1)).